The chain runs to 428 residues: Ribosomal RNA small subunit methyltransferase B (428 aa).

Residues 253 to 259, Asp-276, Asp-302, and Asp-321 contribute to the S-adenosyl-L-methionine site; that span reads CAAPGGK. The active-site Nucleophile is the Cys-374.

The protein belongs to the class I-like SAM-binding methyltransferase superfamily. RsmB/NOP family.

It localises to the cytoplasm. The catalysed reaction is cytidine(967) in 16S rRNA + S-adenosyl-L-methionine = 5-methylcytidine(967) in 16S rRNA + S-adenosyl-L-homocysteine + H(+). Its function is as follows. Specifically methylates the cytosine at position 967 (m5C967) of 16S rRNA. This Citrobacter koseri (strain ATCC BAA-895 / CDC 4225-83 / SGSC4696) protein is Ribosomal RNA small subunit methyltransferase B.